The primary structure comprises 537 residues: Asparagine-rich protein (537 aa).

5 disordered regions span residues 1–22 (YNNN…QNTN), 187–254 (NMNI…NNNF), 336–372 (YNNN…YGYD), 399–479 (LNNN…DDWG), and 509–528 (DLSK…MKKD). 2 stretches are compositionally biased toward low complexity: residues 336–347 (YNNNESNTANPN) and 399–469 (LNNN…NQNN). Acidic residues predominate over residues 470–479 (NEDEDDDDWG). The segment covering 509–518 (DLSKKGNDGK) has biased composition (basic and acidic residues).

In Plasmodium falciparum, this protein is Asparagine-rich protein.